Here is a 374-residue protein sequence, read N- to C-terminus: Queuine tRNA-ribosyltransferase (374 aa).

The active-site Proton acceptor is Asp91. Substrate is bound by residues 91 to 95 (DSGGY), Asp145, Gln189, and Gly216. Positions 247–253 (GVGTVPD) are RNA binding. Asp266 serves as the catalytic Nucleophile. Positions 271 to 275 (TRNAR) are RNA binding; important for wobble base 34 recognition. Zn(2+) is bound by residues Cys304, Cys306, Cys309, and His335.

It belongs to the queuine tRNA-ribosyltransferase family. As to quaternary structure, homodimer. Within each dimer, one monomer is responsible for RNA recognition and catalysis, while the other monomer binds to the replacement base PreQ1. It depends on Zn(2+) as a cofactor.

It carries out the reaction 7-aminomethyl-7-carbaguanine + guanosine(34) in tRNA = 7-aminomethyl-7-carbaguanosine(34) in tRNA + guanine. The protein operates within tRNA modification; tRNA-queuosine biosynthesis. Its function is as follows. Catalyzes the base-exchange of a guanine (G) residue with the queuine precursor 7-aminomethyl-7-deazaguanine (PreQ1) at position 34 (anticodon wobble position) in tRNAs with GU(N) anticodons (tRNA-Asp, -Asn, -His and -Tyr). Catalysis occurs through a double-displacement mechanism. The nucleophile active site attacks the C1' of nucleotide 34 to detach the guanine base from the RNA, forming a covalent enzyme-RNA intermediate. The proton acceptor active site deprotonates the incoming PreQ1, allowing a nucleophilic attack on the C1' of the ribose to form the product. After dissociation, two additional enzymatic reactions on the tRNA convert PreQ1 to queuine (Q), resulting in the hypermodified nucleoside queuosine (7-(((4,5-cis-dihydroxy-2-cyclopenten-1-yl)amino)methyl)-7-deazaguanosine). The sequence is that of Queuine tRNA-ribosyltransferase from Leptospira interrogans serogroup Icterohaemorrhagiae serovar Lai (strain 56601).